We begin with the raw amino-acid sequence, 127 residues long: Lysozyme C (127 aa).

Positions 1 to 127 constitute a C-type lysozyme domain; sequence KDIPRCELVK…KDLSSYVRGC (127 aa). 4 disulfides stabilise this stretch: cysteine 6–cysteine 127, cysteine 30–cysteine 115, cysteine 64–cysteine 80, and cysteine 76–cysteine 94. Residues glutamate 35 and aspartate 52 contribute to the active site. Ca(2+) is bound by residues lysine 82, aspartate 85, asparagine 87, aspartate 90, and aspartate 91.

This sequence belongs to the glycosyl hydrolase 22 family. In terms of assembly, monomer. The cofactor is Ca(2+).

The protein localises to the secreted. It catalyses the reaction Hydrolysis of (1-&gt;4)-beta-linkages between N-acetylmuramic acid and N-acetyl-D-glucosamine residues in a peptidoglycan and between N-acetyl-D-glucosamine residues in chitodextrins.. Its function is as follows. Lysozymes have primarily a bacteriolytic function; those in tissues and body fluids are associated with the monocyte-macrophage system and enhance the activity of immunoagents. In Columba livia (Rock dove), this protein is Lysozyme C (LYZ).